A 92-amino-acid chain; its full sequence is Small ribosomal subunit protein uS19 (92 aa).

This sequence belongs to the universal ribosomal protein uS19 family.

In terms of biological role, protein S19 forms a complex with S13 that binds strongly to the 16S ribosomal RNA. The sequence is that of Small ribosomal subunit protein uS19 from Thermosynechococcus vestitus (strain NIES-2133 / IAM M-273 / BP-1).